Consider the following 284-residue polypeptide: Xyloglucan endotransglucosylase/hydrolase protein 22 (284 aa).

The first 21 residues, 1–21 (MAITYLLPLFLSLIITSSVSA), serve as a signal peptide directing secretion. The region spanning 22 to 211 (NFQRDVEITW…WSKAPFTASY (190 aa)) is the GH16 domain. Glutamate 97 functions as the Nucleophile in the catalytic mechanism. Glutamate 101 serves as the catalytic Proton donor. Position 101 (glutamate 101) interacts with xyloglucan. Asparagine 105 carries an N-linked (GlcNAc...) asparagine glycan. Residues 114 to 116 (HTN), 124 to 126 (DKE), 190 to 191 (DW), and glycine 195 each bind xyloglucan. Cysteine 219 and cysteine 228 are oxidised to a cystine. Residue asparagine 230 is glycosylated (N-linked (GlcNAc...) asparagine). Cysteine 267 and cysteine 281 are disulfide-bonded. Xyloglucan is bound at residue arginine 272.

This sequence belongs to the glycosyl hydrolase 16 family. XTH group 2 subfamily. In terms of processing, contains at least one intrachain disulfide bond essential for its enzymatic activity. N-glycosylated; essential for its enzymatic activity. As to expression, highly expressed. Predominantly expressed in green siliques. Expressed in young expanding leaves, trichomes, lateral root primordia, vascular tissue, abscission zones and elongating hypocols. Following wind stimulation, it decreases in the leaves of wind-stimulated plants, while it strongly increases in sites around cells of the pith parenchyma, between the vascular elements, and within the epidermis.

It localises to the secreted. The protein localises to the cell wall. It is found in the extracellular space. The protein resides in the apoplast. The enzyme catalyses breaks a beta-(1-&gt;4) bond in the backbone of a xyloglucan and transfers the xyloglucanyl segment on to O-4 of the non-reducing terminal glucose residue of an acceptor, which can be a xyloglucan or an oligosaccharide of xyloglucan.. In terms of biological role, catalyzes xyloglucan endohydrolysis (XEH) and/or endotransglycosylation (XET). Cleaves and religates xyloglucan polymers, an essential constituent of the primary cell wall, and thereby participates in cell wall construction of growing tissues. Its induction in case of mechanical stress, suggests that it may contribute in the adaptive changes in morphogenesis by being recruited to alter tissues tensil strength, or flexibility, enabling adaptation to mechanically stressful environments. The chain is Xyloglucan endotransglucosylase/hydrolase protein 22 (XTH22) from Arabidopsis thaliana (Mouse-ear cress).